Consider the following 258-residue polypeptide: Pimeloyl-[acyl-carrier protein] methyl ester esterase (258 aa).

Residues W22, 84–85 (SL), and 145–149 (FLAIQ) each bind substrate. The active-site Nucleophile is S84. Active-site residues include D209 and H238. H238 contributes to the substrate binding site.

This sequence belongs to the AB hydrolase superfamily. Carboxylesterase BioH family. In terms of assembly, monomer.

Its subcellular location is the cytoplasm. It catalyses the reaction 6-carboxyhexanoyl-[ACP] methyl ester + H2O = 6-carboxyhexanoyl-[ACP] + methanol + H(+). It functions in the pathway cofactor biosynthesis; biotin biosynthesis. The physiological role of BioH is to remove the methyl group introduced by BioC when the pimeloyl moiety is complete. It allows to synthesize pimeloyl-ACP via the fatty acid synthetic pathway through the hydrolysis of the ester bonds of pimeloyl-ACP esters. This is Pimeloyl-[acyl-carrier protein] methyl ester esterase from Pseudoalteromonas atlantica (strain T6c / ATCC BAA-1087).